The following is a 941-amino-acid chain: Replicative DNA helicase DnaB (941 aa).

The tract at residues 1 to 25 (MAEFEERPRLSIGEEEAPPYPLEKL) is disordered. Residues 214 to 484 (RPGGITGVPS…PVYRLTTRLG (271 aa)) enclose the SF4 helicase; first part domain. 245–252 (ARPSMGKT) serves as a coordination point for ATP. The region spanning 534 to 683 (LLGHLIGDGC…VQSLLLRLGI (150 aa)) is the DOD-type homing endonuclease domain. In terms of domain architecture, SF4 helicase; second part spans 646-915 (DGCIQMRRGK…ARFENLTMYQ (270 aa)). Residues 914–941 (YQPEPGTPLPETPDETILPSGPPDEAPF) form a disordered region.

Belongs to the helicase family. DnaB subfamily. As to quaternary structure, homohexamer. Upon expression in E.coli this protein undergoes self splicing that involves a post-translational excision of the intervening region (intein) followed by peptide ligation.

The catalysed reaction is Couples ATP hydrolysis with the unwinding of duplex DNA at the replication fork by translocating in the 5'-3' direction. This creates two antiparallel DNA single strands (ssDNA). The leading ssDNA polymer is the template for DNA polymerase III holoenzyme which synthesizes a continuous strand.. It catalyses the reaction ATP + H2O = ADP + phosphate + H(+). Functionally, the main replicative DNA helicase, it participates in initiation and elongation during chromosome replication. Travels ahead of the DNA replisome, separating dsDNA into templates for DNA synthesis. A processive ATP-dependent 5'-3' DNA helicase it has DNA-dependent ATPase activity. In terms of biological role, the intein is an endonuclease. This Rhodothermus marinus (Rhodothermus obamensis) protein is Replicative DNA helicase DnaB.